The sequence spans 108 residues: BH3-like motif-containing cell death inducer (108 aa).

The BH3-like signature appears at 5 to 12 (LPIEGQEI).

Ubiquitously expressed.

The protein resides in the cytoplasm. The protein localises to the mitochondrion. In terms of biological role, functions as a proapoptotic molecule through the caspase-dependent mitochondrial pathway of cell death. This chain is BH3-like motif-containing cell death inducer (BLID), found in Homo sapiens (Human).